The sequence spans 1044 residues: Diacylglycerol lipase-alpha (1044 aa).

Residues 1-22 (MPGIVVFRRRWSVGSDDLVLPA) lie on the Cytoplasmic side of the membrane. Residues 23-43 (IFLFLLHTTWFVILSVVLFGL) form a helical membrane-spanning segment. Topologically, residues 44-60 (VYNPHEACSLNLVDHGR) are extracellular. The chain crosses the membrane as a helical span at residues 61 to 81 (GYLGILLSCMIAEMAIIWLSM). Topologically, residues 82–101 (RGGILYTEPRDSMQYVLYVR) are cytoplasmic. A helical membrane pass occupies residues 102-122 (LAILVIEFIYAIVGIVWLTQY). Residues 123-136 (YTSCNDLTAKNVTL) are Extracellular-facing. The N-linked (GlcNAc...) asparagine glycan is linked to N133. Residues 137 to 157 (GMVVCNWVVILSVCITVLCVF) traverse the membrane as a helical segment. The Cytoplasmic portion of the chain corresponds to 158–1044 (DPTGRTFVKL…KQDDLVISAR (887 aa)). Active-site charge relay system residues include S472 and D524. Phosphoserine occurs at positions 728, 730, 733, 744, 784, 786, 808, 810, 835, 849, and 954. The segment at 848–897 (LSKHSQDTQPLEAALGSGGVTPERPPSATIEEEEAAGGSEGGGVAPRGEL) is disordered. Positions 1013-1044 (QECLATDKIRTSTPTGHGASPTKQDDLVISAR) are disordered. At T1025 the chain carries Phosphothreonine.

It belongs to the AB hydrolase superfamily. Lipase family. As to quaternary structure, interacts (via C-terminal) with CAMK2A; leading to the phosphorylation and inhibition of DAGLA enzymatic activity. Interacts (via PPXXF motif) with HOMER1 and HOMER2; this interaction is required for DAGLA membrane localization. Ca(2+) is required as a cofactor. Post-translationally, phosphorylated at Ser-784 and Ser-810 by CAMK2A; phosphorylation by CAMK2A inhibits diacylglycerol lipase activity. In terms of tissue distribution, highly expressed by principal cells in the hippocampus. In embryonic brains, it is present in axonal tracts, while in adults it localizes to dendritic fields, correlating with the developmental change in requirement for 2-AG synthesis from the pre- to the postsynaptic compartment. Concentrated in heads of dendritic spines throughout the hippocampal formation. Highly compartmentalized into a wide perisynaptic annulus around the postsynaptic density of axospinous contacts but not intrasynaptically (at protein level).

The protein localises to the cell membrane. It localises to the cell projection. It is found in the dendritic spine membrane. Its subcellular location is the postsynaptic density membrane. The protein resides in the early endosome membrane. The enzyme catalyses a 1,2-diacyl-sn-glycerol + H2O = a 2-acylglycerol + a fatty acid + H(+). It carries out the reaction 1-octadecanoyl-2-(5Z,8Z,11Z,14Z-eicosatetraenoyl)-sn-glycerol + H2O = 2-(5Z,8Z,11Z,14Z-eicosatetraenoyl)-glycerol + octadecanoate + H(+). The catalysed reaction is 1,2-di-(9Z-octadecenoyl)-sn-glycerol + H2O = 2-(9Z-octadecenoyl)-glycerol + (9Z)-octadecenoate + H(+). It catalyses the reaction 1-(9Z-octadecenoyl)-2-(5Z,8Z,11Z,14Z-eicosatetraenoyl)-sn-glycerol + H2O = 2-(5Z,8Z,11Z,14Z-eicosatetraenoyl)-glycerol + (9Z)-octadecenoate + H(+). The enzyme catalyses 1-(9Z-octadecenoyl)-2-octadecanoyl-sn-glycerol + H2O = 2-octadecanoylglycerol + (9Z)-octadecenoate + H(+). It carries out the reaction 1-(9Z-octadecenoyl)-2-(9Z,12Z-octadecadienoyl)-sn-glycerol + H2O = 2-(9Z,12Z-octadecadienoyl)-glycerol + (9Z)-octadecenoate + H(+). The catalysed reaction is 1-(9Z-octadecenoyl)-2-O-(5Z,8Z,11Z,14Z-eicosatetraenyl)-sn-glycerol + H2O = 2-O-(5Z,8Z,11Z,14Z)-eicosatetraenylglycerol + (9Z)-octadecenoate + H(+). Inhibited by 1,2,3-triazole urea covalent inhibitor KT172, DH376 and DO34. Inhibited by p-hydroxy-mercuri-benzoate and HgCl(2), but not to PMSF. Also inhibited by RHC80267. Diacylglycerol lipase activity is inhibited by the phosphorylation of Ser-784 and Ser-810 by CAMK2A. Its function is as follows. Serine hydrolase that hydrolyzes arachidonic acid-esterified diacylglycerols (DAGs) to produce the principal endocannabinoid (eCB), 2-arachidonoylglycerol (2-AG). Preferentially hydrolyzes sn-1 fatty acids from diacylglycerols (DAG) that contain arachidonic acid (AA) esterified at the sn-2 position to biosynthesize 2-AG. Has negligible activity against other lipids including monoacylglycerols and phospholipids. Plays a key role in regulating 2-AG signaling in the central nervous system (CNS). Controls the activity of 2-AG as a retrograde messenger at neuronal synapses. Supports axonal growth during development and adult neurogenesis. Plays a role for eCB signaling in the physiological regulation of anxiety and depressive behaviors. Also regulates neuroinflammatory responses in the brain, in particular, LPS-induced microglial activation. The sequence is that of Diacylglycerol lipase-alpha (Dagla) from Mus musculus (Mouse).